A 44-amino-acid polypeptide reads, in one-letter code: Putative protein PsbN (44 aa).

The helical transmembrane segment at 3–23 (IISFLSTIFLGFFIISTTIYS) threads the bilayer.

It belongs to the PsbN family.

It is found in the plastid. Its subcellular location is the chloroplast thylakoid membrane. Functionally, may play a role in photosystem I and II biogenesis. This Euglena gracilis protein is Putative protein PsbN.